Consider the following 128-residue polypeptide: Sulfurtransferase TusD (128 aa).

Cys78 acts as the Cysteine persulfide intermediate in catalysis.

It belongs to the DsrE/TusD family. In terms of assembly, heterohexamer, formed by a dimer of trimers. The hexameric TusBCD complex contains 2 copies each of TusB, TusC and TusD. The TusBCD complex interacts with TusE.

The protein localises to the cytoplasm. In terms of biological role, part of a sulfur-relay system required for 2-thiolation of 5-methylaminomethyl-2-thiouridine (mnm(5)s(2)U) at tRNA wobble positions. Accepts sulfur from TusA and transfers it in turn to TusE. This chain is Sulfurtransferase TusD, found in Cronobacter sakazakii (strain ATCC BAA-894) (Enterobacter sakazakii).